A 101-amino-acid chain; its full sequence is MSDQEAKPSTEDLGDKKEGEYIKLKVIGQDSSEIHFKVKMTTHLKKLKESYCQRQGVPMNSLRFLFEGQRIADNHTPKELGMEEEDVIEVYQEQTGGHSTV.

Position 2 is an N-acetylserine (Ser2). Position 2 is a phosphoserine (Ser2). Residue Lys7 forms a Glycyl lysine isopeptide (Lys-Gly) (interchain with G-Cter in SUMO1); alternate linkage. Lys7 participates in a covalent cross-link: Glycyl lysine isopeptide (Lys-Gly) (interchain with G-Cter in SUMO2); alternate. Ser9 is modified (phosphoserine). Glycyl lysine isopeptide (Lys-Gly) (interchain with G-Cter in SUMO2) cross-links involve residues Lys16, Lys17, and Lys23. Residues 16–25 form a (Microbial infection) Interaction with Tula hantavirus region; the sequence is KKEGEYIKLK. The Ubiquitin-like domain maps to 20–97; it reads EYIKLKVIGQ…IEVYQEQTGG (78 aa). A Glycyl lysine isopeptide (Lys-Gly) (interchain with G-Cter in SUMO1) cross-link involves residue Lys25. At Ser32 the chain carries Phosphoserine. Residues Lys37, Lys39, Lys45, and Lys46 each participate in a glycyl lysine isopeptide (Lys-Gly) (interchain with G-Cter in SUMO2) cross-link. The segment at 37–40 is (Microbial infection) Interaction with Tula hantavirus; sequence KVKM. Residue Gly97 forms a Glycyl lysine isopeptide (Gly-Lys) (interchain with K-? in acceptor proteins) linkage. The propeptide occupies 98–101; sequence HSTV.

This sequence belongs to the ubiquitin family. SUMO subfamily. In terms of assembly, covalently attached to KCNB1; UBE2I increases cross-linking with KCNB1 and PIAS1 decreases cross-links with KCNB1. Interacts with SAE2, RANBP2, PIAS1 and PIAS2. Interacts with PRKN. Covalently attached to a number of proteins such as IKFZ1, PML, RANGAP1, HIPK2, SP100, p53, p73-alpha, MDM2, JUN, DNMT3B and TDG. Also interacts with HIF1A, HIPK2, HIPK3, CHD3, EXOSC9, RAD51 and RAD52. Interacts with USP25 (via ts SIM domain); the interaction weakly sumoylates USP25. Interacts with SIMC1, CASP8AP2, RNF111 and SOBP (via SIM domains). Interacts with BHLHE40/DEC1. Interacts with RWDD3. Interacts with UBE2I/UBC9 and this interaction is enhanced in the presence of RWDD3. Interacts with MTA1. Interacts with SENP2. Interacts with HINT1. (Microbial infection) Interacts with Epstein-barr virus BGLF4. As to quaternary structure, (Microbial infection) Interacts (via N-terminus) with Tula hantavirus nucleoprotein. In terms of assembly, (Microbial infection) Interacts (via N-terminus) with Hantaan hantavirus nucleoprotein. Cleavage of precursor form by SENP1 or SENP2 is necessary for function. In terms of processing, polymeric SUMO1 chains undergo polyubiquitination by RNF4.

It localises to the nucleus membrane. The protein localises to the nucleus speckle. Its subcellular location is the cytoplasm. It is found in the nucleus. The protein resides in the PML body. It localises to the cell membrane. Ubiquitin-like protein that can be covalently attached to proteins as a monomer or a lysine-linked polymer. Covalent attachment via an isopeptide bond to its substrates requires prior activation by the E1 complex SAE1-SAE2 and linkage to the E2 enzyme UBE2I, and can be promoted by E3 ligases such as PIAS1-4, RANBP2 or CBX4. This post-translational modification on lysine residues of proteins plays a crucial role in a number of cellular processes such as nuclear transport, DNA replication and repair, mitosis and signal transduction. Involved for instance in targeting RANGAP1 to the nuclear pore complex protein RANBP2. Covalently attached to the voltage-gated potassium channel KCNB1; this modulates the gating characteristics of KCNB1. Polymeric SUMO1 chains are also susceptible to polyubiquitination which functions as a signal for proteasomal degradation of modified proteins. May also regulate a network of genes involved in palate development. Covalently attached to ZFHX3. The sequence is that of Small ubiquitin-related modifier 1 (SUMO1) from Homo sapiens (Human).